We begin with the raw amino-acid sequence, 216 residues long: [5-(aminomethyl)furan-3-yl]methyl phosphate kinase (216 aa).

ATP-binding positions include 5-9, G39, D142, 147-152, and G166; these read KIGGS and YDKFPG.

It belongs to the MfnE family. Homotrimer. Mg(2+) serves as cofactor.

It catalyses the reaction [5-(aminomethyl)-3-furyl]methyl phosphate + ATP = [5-(aminomethyl)furan-3-yl]methyl diphosphate + ADP. It functions in the pathway cofactor biosynthesis; methanofuran biosynthesis. Its activity is regulated as follows. Inhibited by EDTA. Functionally, catalyzes the formation of 5-(aminomethyl)-3-furanmethanol diphosphate (F1-PP) from 5-(aminomethyl)-3-furanmethanol phosphate (F1-P) and ATP. In vitro, can also act as an adenylate kinase that catalyzes the transfer of a phosphoryl group from ATP to AMP, generating two molecules of ADP. The polypeptide is [5-(aminomethyl)furan-3-yl]methyl phosphate kinase (Methanocaldococcus jannaschii (strain ATCC 43067 / DSM 2661 / JAL-1 / JCM 10045 / NBRC 100440) (Methanococcus jannaschii)).